The sequence spans 379 residues: 1-deoxy-D-xylulose 5-phosphate reductoisomerase (379 aa).

NADPH contacts are provided by Thr-10, Gly-11, Ser-12, Ile-13, Gly-36, Asn-38, and Asn-121. Lys-122 serves as a coordination point for 1-deoxy-D-xylulose 5-phosphate. Glu-123 provides a ligand contact to NADPH. Mn(2+) is bound at residue Asp-147. 1-deoxy-D-xylulose 5-phosphate-binding residues include Ser-148, Glu-149, Ser-173, and His-196. A Mn(2+)-binding site is contributed by Glu-149. Gly-202 serves as a coordination point for NADPH. Ser-209, Asn-214, Lys-215, and Glu-218 together coordinate 1-deoxy-D-xylulose 5-phosphate. Residue Glu-218 coordinates Mn(2+).

This sequence belongs to the DXR family. It depends on Mg(2+) as a cofactor. Requires Mn(2+) as cofactor.

The enzyme catalyses 2-C-methyl-D-erythritol 4-phosphate + NADP(+) = 1-deoxy-D-xylulose 5-phosphate + NADPH + H(+). Its pathway is isoprenoid biosynthesis; isopentenyl diphosphate biosynthesis via DXP pathway; isopentenyl diphosphate from 1-deoxy-D-xylulose 5-phosphate: step 1/6. Catalyzes the NADPH-dependent rearrangement and reduction of 1-deoxy-D-xylulose-5-phosphate (DXP) to 2-C-methyl-D-erythritol 4-phosphate (MEP). The sequence is that of 1-deoxy-D-xylulose 5-phosphate reductoisomerase from Shouchella clausii (strain KSM-K16) (Alkalihalobacillus clausii).